The primary structure comprises 57 residues: Protein translocase subunit SecE (57 aa).

A helical membrane pass occupies residues 33 to 53 (GLGILLVGFIGFVIFSIMTFV).

Belongs to the SecE/SEC61-gamma family. Component of the Sec protein translocase complex. Heterotrimer consisting of SecY (alpha), SecG (beta) and SecE (gamma) subunits. The heterotrimers can form oligomers, although 1 heterotrimer is thought to be able to translocate proteins. Interacts with the ribosome. May interact with SecDF, and other proteins may be involved.

It is found in the cell membrane. Its function is as follows. Essential subunit of the Sec protein translocation channel SecYEG. Clamps together the 2 halves of SecY. May contact the channel plug during translocation. This Natronomonas pharaonis (strain ATCC 35678 / DSM 2160 / CIP 103997 / JCM 8858 / NBRC 14720 / NCIMB 2260 / Gabara) (Halobacterium pharaonis) protein is Protein translocase subunit SecE.